Reading from the N-terminus, the 616-residue chain is Proline--tRNA ligase (616 aa).

It belongs to the class-II aminoacyl-tRNA synthetase family. ProS type 1 subfamily. As to quaternary structure, homodimer.

It localises to the cytoplasm. It catalyses the reaction tRNA(Pro) + L-proline + ATP = L-prolyl-tRNA(Pro) + AMP + diphosphate. Its function is as follows. Catalyzes the attachment of proline to tRNA(Pro) in a two-step reaction: proline is first activated by ATP to form Pro-AMP and then transferred to the acceptor end of tRNA(Pro). As ProRS can inadvertently accommodate and process non-cognate amino acids such as alanine and cysteine, to avoid such errors it has two additional distinct editing activities against alanine. One activity is designated as 'pretransfer' editing and involves the tRNA(Pro)-independent hydrolysis of activated Ala-AMP. The other activity is designated 'posttransfer' editing and involves deacylation of mischarged Ala-tRNA(Pro). The misacylated Cys-tRNA(Pro) is not edited by ProRS. The polypeptide is Proline--tRNA ligase (Streptococcus mutans serotype c (strain ATCC 700610 / UA159)).